The following is a 324-amino-acid chain: Ribosomal RNA small subunit methyltransferase H (324 aa).

S-adenosyl-L-methionine-binding positions include 35-37 (GGH), Asp-55, Phe-85, Asp-103, and Gln-110.

It belongs to the methyltransferase superfamily. RsmH family.

The protein resides in the cytoplasm. It catalyses the reaction cytidine(1402) in 16S rRNA + S-adenosyl-L-methionine = N(4)-methylcytidine(1402) in 16S rRNA + S-adenosyl-L-homocysteine + H(+). Functionally, specifically methylates the N4 position of cytidine in position 1402 (C1402) of 16S rRNA. In Solidesulfovibrio magneticus (strain ATCC 700980 / DSM 13731 / RS-1) (Desulfovibrio magneticus), this protein is Ribosomal RNA small subunit methyltransferase H.